Consider the following 702-residue polypeptide: Archaeal Lon protease (702 aa).

The segment at 1-63 (MSNESTNDAP…VGVEGDVSID (63 aa)) is disordered. Topologically, residues 1–183 (MSNESTNDAP…EARKRNQMRS (183 aa)) are cytoplasmic. Residues 10–48 (PPDDDPDDPEPSVDHDDTDGLQDDPADSVDDAGEVDDLE) are compositionally biased toward acidic residues. Residue 117–124 (GSPGTGKS) participates in ATP binding. Residues 184–201 (FLMWIMILLAVGYALLIA) form a helical membrane-spanning segment. Over 202-206 (TPARP) the chain is Extracellular. A helical membrane pass occupies residues 207–223 (LLALLSAAGIYLLFRYT). Residues 224–702 (NRGSDAMVPK…GTTGGNPSPQ (479 aa)) lie on the Cytoplasmic side of the membrane. The Lon proteolytic domain maps to 487–667 (EEAVGRVNGL…SEVLDVALVG (181 aa)). Active-site residues include Ser-574 and Lys-617.

The protein belongs to the peptidase S16 family. Archaeal LonB subfamily. Homohexamer. Organized in a ring with a central cavity.

Its subcellular location is the cell membrane. In terms of biological role, ATP-dependent serine protease that mediates the selective degradation of mutant and abnormal proteins as well as certain short-lived regulatory proteins. Degrades polypeptides processively. The protein is Archaeal Lon protease of Halobacterium salinarum (strain ATCC 700922 / JCM 11081 / NRC-1) (Halobacterium halobium).